A 150-amino-acid chain; its full sequence is Large ribosomal subunit protein uL11 (150 aa).

This sequence belongs to the universal ribosomal protein uL11 family. As to quaternary structure, part of the ribosomal stalk of the 50S ribosomal subunit. Interacts with L10 and the large rRNA to form the base of the stalk. L10 forms an elongated spine to which L12 dimers bind in a sequential fashion forming a multimeric L10(L12)X complex. In terms of processing, one or more lysine residues are methylated.

Forms part of the ribosomal stalk which helps the ribosome interact with GTP-bound translation factors. In Azobacteroides pseudotrichonymphae genomovar. CFP2, this protein is Large ribosomal subunit protein uL11.